Reading from the N-terminus, the 447-residue chain is Crotonyl-CoA reductase (447 aa).

Belongs to the zinc-containing alcohol dehydrogenase family. Crotonyl-CoA carboxylase/reductase subfamily. Homodimer.

The enzyme catalyses butanoyl-CoA + NADP(+) = (2E)-butenoyl-CoA + NADPH + H(+). Its activity is regulated as follows. Inhibited by divalent cations (30-100%), beta-chloromercuribenzoate (85%), iodoacetamide (40%) and N-ethylmaleamide (80%). The presence of CoA thioesters containing 12-20 carbon atoms results in inhibition of enzyme activity. The greatest degree of inhibition is observed in the presence of palmitoyl-CoA and myristoyl-CoA. The branched-chain fatty acids, isopalmitoyl-CoA and isomyristoyl-CoA are less effective inhibitors of the crotonyl-CoA reductase. Concentrations of NADPH above 200 uM lead to inhibition of enzyme activity. Functionally, may play a role in supplying butyryl-CoA for straight-chain fatty acid biosynthesis. Catalyzes the conversion of crotonyl-CoA to butyryl-CoA. It shows a high substrate specificity for crotonyl-CoA, a short-chain-length (C4), but no measurable activity is observed with shorter (C3) or longer-chain-length enoyl-CoA thioesters. In Streptomyces collinus, this protein is Crotonyl-CoA reductase (ccr).